A 786-amino-acid polypeptide reads, in one-letter code: Probable aminopeptidase 1 (786 aa).

Residues E103 and 235 to 239 (GAMEN) each bind substrate. H270 lines the Zn(2+) pocket. E271 functions as the Proton acceptor in the catalytic mechanism. Zn(2+) is bound by residues H274 and E293.

It belongs to the peptidase M1 family. It depends on Zn(2+) as a cofactor.

Its subcellular location is the cytoplasm. The chain is Probable aminopeptidase 1 (ape1) from Sulfurisphaera tokodaii (strain DSM 16993 / JCM 10545 / NBRC 100140 / 7) (Sulfolobus tokodaii).